We begin with the raw amino-acid sequence, 329 residues long: Src kinase-associated phosphoprotein 2 (329 aa).

The disordered stretch occupies residues 58 to 95; the sequence is YAEDSEEEEDWDSNEGGSLQSERTDKDEEACEGAQQAP. The segment covering 61 to 70 has biased composition (acidic residues); that stretch reads DSEEEEDWDS. The PH domain maps to 104 to 207; it reads SVFKAGYLEK…WVKQIDFVLK (104 aa). Residues 240–263 form a disordered region; the sequence is EDMPSPPPKVEPVSKHPPPTPAVD. The segment covering 243-260 has biased composition (pro residues); that stretch reads PSPPPKVEPVSKHPPPTP. One can recognise an SH3 domain in the interval 267-328; it reads DYANYYQGLW…PKDYLMELYA (62 aa).

Belongs to the SKAP family. Post-translationally, phosphorylated on tyrosines.

It localises to the cytoplasm. In terms of biological role, may be involved in B-cell and macrophage adhesion processes. May play a role in src signaling pathway. The protein is Src kinase-associated phosphoprotein 2 (skap2) of Takifugu rubripes (Japanese pufferfish).